A 200-amino-acid chain; its full sequence is NADH-quinone oxidoreductase subunit C (200 aa).

Belongs to the complex I 30 kDa subunit family. As to quaternary structure, NDH-1 is composed of 14 different subunits. Subunits NuoB, C, D, E, F, and G constitute the peripheral sector of the complex.

It is found in the cell inner membrane. The catalysed reaction is a quinone + NADH + 5 H(+)(in) = a quinol + NAD(+) + 4 H(+)(out). In terms of biological role, NDH-1 shuttles electrons from NADH, via FMN and iron-sulfur (Fe-S) centers, to quinones in the respiratory chain. The immediate electron acceptor for the enzyme in this species is believed to be ubiquinone. Couples the redox reaction to proton translocation (for every two electrons transferred, four hydrogen ions are translocated across the cytoplasmic membrane), and thus conserves the redox energy in a proton gradient. This chain is NADH-quinone oxidoreductase subunit C, found in Ruegeria pomeroyi (strain ATCC 700808 / DSM 15171 / DSS-3) (Silicibacter pomeroyi).